Consider the following 208-residue polypeptide: Cytochrome c biogenesis ATP-binding export protein CcmA (208 aa).

The ABC transporter domain maps to 2-206 (LEAKELTCAR…IRLTAEGRDE (205 aa)). 34-41 (GPNGAGKT) serves as a coordination point for ATP.

The protein belongs to the ABC transporter superfamily. CcmA exporter (TC 3.A.1.107) family. As to quaternary structure, the complex is composed of two ATP-binding proteins (CcmA) and two transmembrane proteins (CcmB).

The protein resides in the cell inner membrane. It carries out the reaction heme b(in) + ATP + H2O = heme b(out) + ADP + phosphate + H(+). Its function is as follows. Part of the ABC transporter complex CcmAB involved in the biogenesis of c-type cytochromes; once thought to export heme, this seems not to be the case, but its exact role is uncertain. Responsible for energy coupling to the transport system. This Tatumella citrea (Pantoea citrea) protein is Cytochrome c biogenesis ATP-binding export protein CcmA.